We begin with the raw amino-acid sequence, 346 residues long: uncharacterized protein (346 aa).

Residues 16–36 (ILGIIICIILIVGFFISFDST) traverse the membrane as a helical segment.

The protein localises to the membrane. This is an uncharacterized protein from Methanocaldococcus jannaschii (strain ATCC 43067 / DSM 2661 / JAL-1 / JCM 10045 / NBRC 100440) (Methanococcus jannaschii).